Here is a 238-residue protein sequence, read N- to C-terminus: uncharacterized protein (238 aa).

One can recognise an S4 RNA-binding domain in the interval 1–64 (MRLDKYLSKS…KPKKNVYLML (64 aa)). Asp-103 serves as the catalytic Nucleophile.

This sequence belongs to the pseudouridine synthase RsuA family.

It carries out the reaction a uridine in RNA = a pseudouridine in RNA. This is an uncharacterized protein from Aquifex aeolicus (strain VF5).